The chain runs to 358 residues: Tribbles homolog 3 (358 aa).

The disordered stretch occupies residues 1–54; the sequence is MRATPLAAPAGSLSRKKRLELDDNLDTERPVQKRARSGPQPRLPPCLLPLSPPT. The tract at residues 1–127 is interaction with DDIT3/CHOP; the sequence is MRATPLAAPA…KHVARPTEVL (127 aa). Ser-12 carries the phosphoserine modification. Over residues 41–54 the composition is skewed to pro residues; sequence PRLPPCLLPLSPPT. A Protein kinase domain is found at 68–316; the sequence is LGPYVLLEPE…TGILLHPWLR (249 aa).

It belongs to the protein kinase superfamily. CAMK Ser/Thr protein kinase family. Tribbles subfamily. Interacts with AKT1, AKT2, MAP2K1 and MAP2K7. Interacts with ATF4. Interacts with DDIT3/CHOP and inhibits its interaction with EP300/P300. Interacts with APOBEC3C. Interacts (via N-terminus) with APOBEC3A. Interacts with RELA. In terms of tissue distribution, highest expression in liver, pancreas, peripheral blood leukocytes and bone marrow. Also highly expressed in a number of primary lung, colon and breast tumors. Expressed in spleen, thymus, and prostate and is undetectable in other examined tissues, including testis, ovary, small intestine, colon, leukocyte, heart, brain, placenta, lung, skeletal muscle, and kidney.

It is found in the nucleus. Its function is as follows. Inactive protein kinase which acts as a regulator of the integrated stress response (ISR), a process for adaptation to various stress. Inhibits the transcriptional activity of DDIT3/CHOP and is involved in DDIT3/CHOP-dependent cell death during ER stress. May play a role in programmed neuronal cell death but does not appear to affect non-neuronal cells. Acts as a negative feedback regulator of the ATF4-dependent transcription during the ISR: while TRIB3 expression is promoted by ATF4, TRIB3 protein interacts with ATF4 and inhibits ATF4 transcription activity. Disrupts insulin signaling by binding directly to Akt kinases and blocking their activation. May bind directly to and mask the 'Thr-308' phosphorylation site in AKT1. Interacts with the NF-kappa-B transactivator p65 RELA and inhibits its phosphorylation and thus its transcriptional activation activity. Interacts with MAPK kinases and regulates activation of MAP kinases. Can inhibit APOBEC3A editing of nuclear DNA. The sequence is that of Tribbles homolog 3 (TRIB3) from Homo sapiens (Human).